Here is a 421-residue protein sequence, read N- to C-terminus: Type II methyltransferase M.SfiI (421 aa).

Belongs to the N(4)/N(6)-methyltransferase family. N(4) subfamily.

It carries out the reaction a 2'-deoxycytidine in DNA + S-adenosyl-L-methionine = an N(4)-methyl-2'-deoxycytidine in DNA + S-adenosyl-L-homocysteine + H(+). A beta subtype methylase, recognizes the double-stranded sequence 5'-GGCCNNNNNGGCC-3', methylates C-? on both strands, and protects the DNA from cleavage by the SfiI endonuclease. The sequence is that of Type II methyltransferase M.SfiI from Streptomyces fimbriatus.